Here is a 62-residue protein sequence, read N- to C-terminus: Large ribosomal subunit protein uL29 (62 aa).

It belongs to the universal ribosomal protein uL29 family.

This Amoebophilus asiaticus (strain 5a2) protein is Large ribosomal subunit protein uL29.